The sequence spans 1829 residues: Protein TIC 214 (1829 aa).

The next 6 helical transmembrane spans lie at 18 to 38 (IINS…FSIG), 67 to 87 (FIAG…HLAL), 90 to 110 (PHTI…WNNP), 127 to 147 (LSIQ…HFLL), 174 to 194 (FVGW…VLVW), and 224 to 244 (IFSI…PSPI). The segment covering 260 to 272 (RDVEIEKTFERGG) has biased composition (basic and acidic residues). Residues 260 to 301 (RDVEIEKTFERGGTKQGQEVSAEEDPSPSLFSEEKEDPDKIE) form a disordered region.

Belongs to the TIC214 family. Part of the Tic complex.

It localises to the plastid. It is found in the chloroplast inner membrane. Functionally, involved in protein precursor import into chloroplasts. May be part of an intermediate translocation complex acting as a protein-conducting channel at the inner envelope. The chain is Protein TIC 214 from Citrus sinensis (Sweet orange).